Consider the following 75-residue polypeptide: Putative membrane protein insertion efficiency factor (75 aa).

Belongs to the UPF0161 family.

The protein localises to the cell membrane. Could be involved in insertion of integral membrane proteins into the membrane. This Halalkalibacterium halodurans (strain ATCC BAA-125 / DSM 18197 / FERM 7344 / JCM 9153 / C-125) (Bacillus halodurans) protein is Putative membrane protein insertion efficiency factor.